Consider the following 351-residue polypeptide: Ferrochelatase (351 aa).

Residues His-184 and Glu-265 each contribute to the Fe cation site.

Belongs to the ferrochelatase family.

The protein localises to the cytoplasm. It catalyses the reaction heme b + 2 H(+) = protoporphyrin IX + Fe(2+). The protein operates within porphyrin-containing compound metabolism; protoheme biosynthesis; protoheme from protoporphyrin-IX: step 1/1. Its function is as follows. Catalyzes the ferrous insertion into protoporphyrin IX. In Rhodopirellula baltica (strain DSM 10527 / NCIMB 13988 / SH1), this protein is Ferrochelatase.